Here is a 121-residue protein sequence, read N- to C-terminus: Ribosome-binding factor A (121 aa).

Belongs to the RbfA family. As to quaternary structure, monomer. Binds 30S ribosomal subunits, but not 50S ribosomal subunits or 70S ribosomes.

The protein resides in the cytoplasm. Functionally, one of several proteins that assist in the late maturation steps of the functional core of the 30S ribosomal subunit. Associates with free 30S ribosomal subunits (but not with 30S subunits that are part of 70S ribosomes or polysomes). Required for efficient processing of 16S rRNA. May interact with the 5'-terminal helix region of 16S rRNA. This Clostridium novyi (strain NT) protein is Ribosome-binding factor A.